The primary structure comprises 590 residues: Probable indole-3-acetic acid-amido synthetase GH3.1 (590 aa).

It belongs to the IAA-amido conjugating enzyme family.

Functionally, catalyzes the synthesis of indole-3-acetic acid (IAA)-amino acid conjugates, providing a mechanism for the plant to cope with the presence of excess auxin. The protein is Probable indole-3-acetic acid-amido synthetase GH3.1 (GH3.1) of Arabidopsis thaliana (Mouse-ear cress).